We begin with the raw amino-acid sequence, 49 residues long: Large ribosomal subunit protein bL33B (49 aa).

It belongs to the bacterial ribosomal protein bL33 family.

The polypeptide is Large ribosomal subunit protein bL33B (Exiguobacterium sibiricum (strain DSM 17290 / CCUG 55495 / CIP 109462 / JCM 13490 / 255-15)).